The sequence spans 475 residues: 23S rRNA (uracil(1939)-C(5))-methyltransferase RlmD (475 aa).

A compositionally biased stretch (basic residues) spans 1–10 (MAMLGKRRPP). A disordered region spans residues 1-33 (MAMLGKRRPPRTANERVRRERGSATRRDDATAD). Residues 13–30 (ANERVRRERGSATRRDDA) show a composition bias toward basic and acidic residues. A TRAM domain is found at 26-85 (RRDDATADGLSIERLAHDGRGVARDPHGKTVFVDQALPGERVRVAVHRQRKRFDEAHVVE). Residues C98, C104, C107, and C183 each coordinate [4Fe-4S] cluster. Residues Q294, F323, N328, E344, D371, and D388 each contribute to the S-adenosyl-L-methionine site. Catalysis depends on C414, which acts as the Nucleophile. The interval 455–475 (TRDTPRGRSTSVEREDHGQGP) is disordered. The segment covering 457–475 (DTPRGRSTSVEREDHGQGP) has biased composition (basic and acidic residues).

It belongs to the class I-like SAM-binding methyltransferase superfamily. RNA M5U methyltransferase family. RlmD subfamily.

The enzyme catalyses uridine(1939) in 23S rRNA + S-adenosyl-L-methionine = 5-methyluridine(1939) in 23S rRNA + S-adenosyl-L-homocysteine + H(+). Catalyzes the formation of 5-methyl-uridine at position 1939 (m5U1939) in 23S rRNA. This is 23S rRNA (uracil(1939)-C(5))-methyltransferase RlmD from Chromohalobacter salexigens (strain ATCC BAA-138 / DSM 3043 / CIP 106854 / NCIMB 13768 / 1H11).